A 283-amino-acid chain; its full sequence is 4-diphosphocytidyl-2-C-methyl-D-erythritol kinase (283 aa).

The active site involves Lys12. Residue 94–104 (PAQAGLGGGSS) coordinates ATP. Asp136 is an active-site residue.

This sequence belongs to the GHMP kinase family. IspE subfamily.

It carries out the reaction 4-CDP-2-C-methyl-D-erythritol + ATP = 4-CDP-2-C-methyl-D-erythritol 2-phosphate + ADP + H(+). The protein operates within isoprenoid biosynthesis; isopentenyl diphosphate biosynthesis via DXP pathway; isopentenyl diphosphate from 1-deoxy-D-xylulose 5-phosphate: step 3/6. Functionally, catalyzes the phosphorylation of the position 2 hydroxy group of 4-diphosphocytidyl-2C-methyl-D-erythritol. The sequence is that of 4-diphosphocytidyl-2-C-methyl-D-erythritol kinase from Acidovorax ebreus (strain TPSY) (Diaphorobacter sp. (strain TPSY)).